Consider the following 589-residue polypeptide: L-fucose isomerase (589 aa).

Catalysis depends on proton acceptor residues Glu-340 and Asp-364. Positions 340, 364, and 527 each coordinate Mn(2+).

Belongs to the L-fucose isomerase family. Requires Mn(2+) as cofactor.

It localises to the cytoplasm. The enzyme catalyses L-fucose = L-fuculose. It participates in carbohydrate degradation; L-fucose degradation; L-lactaldehyde and glycerone phosphate from L-fucose: step 1/3. Converts the aldose L-fucose into the corresponding ketose L-fuculose. The polypeptide is L-fucose isomerase (Haemophilus influenzae (strain PittEE)).